The sequence spans 151 residues: RNA polymerase-binding transcription factor DksA (151 aa).

Zn(2+) contacts are provided by Cys114, Cys117, Cys135, and Cys138. A dksA C4-type zinc finger spans residues 114–138 (CNSCAVEIGIRRLEARPTANLCIDC).

The protein belongs to the DksA family. As to quaternary structure, interacts directly with the RNA polymerase.

Its subcellular location is the cytoplasm. Functionally, transcription factor that acts by binding directly to the RNA polymerase (RNAP). Required for negative regulation of rRNA expression and positive regulation of several amino acid biosynthesis promoters. Also required for regulation of fis expression. This chain is RNA polymerase-binding transcription factor DksA, found in Buchnera aphidicola subsp. Schizaphis graminum (strain Sg).